The following is a 429-amino-acid chain: Glucose-1-phosphate adenylyltransferase (429 aa).

Residues Gly162, 177–178 (EK), and Ser209 each bind alpha-D-glucose 1-phosphate.

This sequence belongs to the bacterial/plant glucose-1-phosphate adenylyltransferase family. In terms of assembly, homotetramer.

The enzyme catalyses alpha-D-glucose 1-phosphate + ATP + H(+) = ADP-alpha-D-glucose + diphosphate. It participates in glycan biosynthesis; glycogen biosynthesis. With respect to regulation, activated by 3-phosphoglycerate and inhibited by phosphate. In terms of biological role, involved in the biosynthesis of ADP-glucose, a building block required for the elongation reactions to produce glycogen. Catalyzes the reaction between ATP and alpha-D-glucose 1-phosphate (G1P) to produce pyrophosphate and ADP-Glc. This is Glucose-1-phosphate adenylyltransferase from Nostoc sp. (strain PCC 7120 / SAG 25.82 / UTEX 2576).